The following is a 276-amino-acid chain: Small ribosomal subunit protein uS2 (276 aa).

The tract at residues 251-276 (AEEAPAAAEEAPAAEPAAEETPAAEA) is disordered. Positions 252 to 276 (EEAPAAAEEAPAAEPAAEETPAAEA) are enriched in low complexity.

Belongs to the universal ribosomal protein uS2 family.

This is Small ribosomal subunit protein uS2 from Jannaschia sp. (strain CCS1).